The sequence spans 268 residues: Tryptophan synthase alpha chain (268 aa).

Active-site proton acceptor residues include glutamate 49 and aspartate 60.

It belongs to the TrpA family. As to quaternary structure, tetramer of two alpha and two beta chains.

It carries out the reaction (1S,2R)-1-C-(indol-3-yl)glycerol 3-phosphate + L-serine = D-glyceraldehyde 3-phosphate + L-tryptophan + H2O. The protein operates within amino-acid biosynthesis; L-tryptophan biosynthesis; L-tryptophan from chorismate: step 5/5. Functionally, the alpha subunit is responsible for the aldol cleavage of indoleglycerol phosphate to indole and glyceraldehyde 3-phosphate. This is Tryptophan synthase alpha chain from Escherichia coli O6:K15:H31 (strain 536 / UPEC).